Here is a 72-residue protein sequence, read N- to C-terminus: SPbeta prophage-derived uncharacterized protein YopT (72 aa).

In terms of assembly, homodimer.

The polypeptide is SPbeta prophage-derived uncharacterized protein YopT (yopT) (Bacillus subtilis (strain 168)).